A 111-amino-acid polypeptide reads, in one-letter code: Nucleoid-associated protein CYA_1369 (111 aa).

The protein belongs to the YbaB/EbfC family. In terms of assembly, homodimer.

It is found in the cytoplasm. It localises to the nucleoid. Binds to DNA and alters its conformation. May be involved in regulation of gene expression, nucleoid organization and DNA protection. In Synechococcus sp. (strain JA-3-3Ab) (Cyanobacteria bacterium Yellowstone A-Prime), this protein is Nucleoid-associated protein CYA_1369.